A 189-amino-acid chain; its full sequence is GTP cyclohydrolase 1 (189 aa).

The Zn(2+) site is built by Cys-78, His-81, and Cys-150.

The protein belongs to the GTP cyclohydrolase I family. As to quaternary structure, toroid-shaped homodecamer, composed of two pentamers of five dimers.

The catalysed reaction is GTP + H2O = 7,8-dihydroneopterin 3'-triphosphate + formate + H(+). It functions in the pathway cofactor biosynthesis; 7,8-dihydroneopterin triphosphate biosynthesis; 7,8-dihydroneopterin triphosphate from GTP: step 1/1. The polypeptide is GTP cyclohydrolase 1 (Bacillus pumilus (strain SAFR-032)).